Here is a 366-residue protein sequence, read N- to C-terminus: Aminomethyltransferase (366 aa).

Belongs to the GcvT family. As to quaternary structure, the glycine cleavage system is composed of four proteins: P, T, L and H.

It catalyses the reaction N(6)-[(R)-S(8)-aminomethyldihydrolipoyl]-L-lysyl-[protein] + (6S)-5,6,7,8-tetrahydrofolate = N(6)-[(R)-dihydrolipoyl]-L-lysyl-[protein] + (6R)-5,10-methylene-5,6,7,8-tetrahydrofolate + NH4(+). Its function is as follows. The glycine cleavage system catalyzes the degradation of glycine. This is Aminomethyltransferase from Bordetella avium (strain 197N).